The following is a 334-amino-acid chain: MTPLDTKRPLQLNDQGQLRHFLSLDGLRRELLTEILDTADSFLEVGARAVKKVPLLRGKTVCNVFFENSTRTRTTFELAAQRLSADVITLNVSTSSASKGETLLDTLRNLEAMAADMFVVRHGDSGAAHFIAEHVCPQVAIINGGDGRHAHPTQGMLDMLTIRRHKGGFENLSVAIVGDILHSRVARSNMLALKTLGCPDIRVIAPKTLLPIGIEQYGVKVYTDMTEGLKDVDVVIMLRLQRERMTGGLLPSEGEFYRLFGLTTARLAGAKPDCIVMHPGPINRGVEIESAVADGPHSVILNQVTYGIAIRMAVLSMAMSGQTAQRQFEQENAQ.

Residues R71 and T72 each contribute to the carbamoyl phosphate site. K99 provides a ligand contact to L-aspartate. Positions 121, 151, and 154 each coordinate carbamoyl phosphate. The L-aspartate site is built by R184 and R239. Carbamoyl phosphate is bound by residues G280 and P281.

This sequence belongs to the aspartate/ornithine carbamoyltransferase superfamily. ATCase family. Heterododecamer (2C3:3R2) of six catalytic PyrB chains organized as two trimers (C3), and six regulatory PyrI chains organized as three dimers (R2).

The catalysed reaction is carbamoyl phosphate + L-aspartate = N-carbamoyl-L-aspartate + phosphate + H(+). It participates in pyrimidine metabolism; UMP biosynthesis via de novo pathway; (S)-dihydroorotate from bicarbonate: step 2/3. Catalyzes the condensation of carbamoyl phosphate and aspartate to form carbamoyl aspartate and inorganic phosphate, the committed step in the de novo pyrimidine nucleotide biosynthesis pathway. This chain is Aspartate carbamoyltransferase catalytic subunit, found in Pseudomonas fluorescens (strain Pf0-1).